Reading from the N-terminus, the 518-residue chain is MATRINYNYEAAVTYTSLKQNERLMNKSLLRLSTGLRILSAADDASGLFIADQLALVSAGLEQGNRNIQFGISALQIAEGGVSQIYDKLKTMYQKAVSAANDINDPNARAALQRDIENLRDAILKIAQDTEYNGIRLLNGSFNNVRIHYGARSAQTLSVSISSVLPQQLGGYVAEDSPATATDTNNVLTNIGTTNTNYSVASGDSLAFTFTDGTSITFNSLNQLGYDFNNTGTYILDASAIVNTINNNPTLQGKGIRAYAENVSEADLTFDTTNVNIDQGDEVTITFYSGGELVFTKTYTDTVTLDQFIADINNQAGGKLIASKDPSGTKLVLSTPNGETISVEVTVNDADGDTVVSSINLGALLQGAAGTVVNTSGATASAVKVGTLIVMGSENFTVQGTGIAYFTAATSGTFNSLNDVDVTTNKGAEIAQVLIQRAVRQVDTIRTQIGSTINNLQAIYDAQAVAKDNTDNAESIIRNVDFAKEMTEFTKYQIRMQSGVAMLAQANALPQLVLQLLR.

It belongs to the bacterial flagellin family.

It is found in the secreted. The protein localises to the bacterial flagellum. Functionally, flagellin is the subunit protein which polymerizes to form the filaments of bacterial flagella. The protein is Flagellin (flaA) of Aquifex aeolicus (strain VF5).